The sequence spans 170 residues: Peptide deformylase (170 aa).

Positions 93 and 135 each coordinate Fe cation. Residue Glu-136 is part of the active site. A Fe cation-binding site is contributed by His-139.

Belongs to the polypeptide deformylase family. Fe(2+) is required as a cofactor.

The catalysed reaction is N-terminal N-formyl-L-methionyl-[peptide] + H2O = N-terminal L-methionyl-[peptide] + formate. In terms of biological role, removes the formyl group from the N-terminal Met of newly synthesized proteins. Requires at least a dipeptide for an efficient rate of reaction. N-terminal L-methionine is a prerequisite for activity but the enzyme has broad specificity at other positions. This is Peptide deformylase from Acidobacterium capsulatum (strain ATCC 51196 / DSM 11244 / BCRC 80197 / JCM 7670 / NBRC 15755 / NCIMB 13165 / 161).